The sequence spans 341 residues: Phosphate acyltransferase (341 aa).

This sequence belongs to the PlsX family. As to quaternary structure, homodimer. Probably interacts with PlsY.

Its subcellular location is the cytoplasm. It carries out the reaction a fatty acyl-[ACP] + phosphate = an acyl phosphate + holo-[ACP]. Its pathway is lipid metabolism; phospholipid metabolism. Its function is as follows. Catalyzes the reversible formation of acyl-phosphate (acyl-PO(4)) from acyl-[acyl-carrier-protein] (acyl-ACP). This enzyme utilizes acyl-ACP as fatty acyl donor, but not acyl-CoA. This chain is Phosphate acyltransferase, found in Ehrlichia ruminantium (strain Gardel).